The following is a 224-amino-acid chain: Urease accessory protein UreF (224 aa).

The protein belongs to the UreF family. As to quaternary structure, ureD, UreF and UreG form a complex that acts as a GTP-hydrolysis-dependent molecular chaperone, activating the urease apoprotein by helping to assemble the nickel containing metallocenter of UreC. The UreE protein probably delivers the nickel.

The protein localises to the cytoplasm. In terms of biological role, required for maturation of urease via the functional incorporation of the urease nickel metallocenter. The sequence is that of Urease accessory protein UreF from Enterobacter sp. (strain 638).